The primary structure comprises 502 residues: Probable cytosol aminopeptidase (502 aa).

Mn(2+)-binding residues include Lys-269 and Asp-274. The active site involves Lys-281. Residues Asp-292, Asp-351, and Glu-353 each contribute to the Mn(2+) site. Residue Arg-355 is part of the active site.

This sequence belongs to the peptidase M17 family. It depends on Mn(2+) as a cofactor.

It localises to the cytoplasm. The catalysed reaction is Release of an N-terminal amino acid, Xaa-|-Yaa-, in which Xaa is preferably Leu, but may be other amino acids including Pro although not Arg or Lys, and Yaa may be Pro. Amino acid amides and methyl esters are also readily hydrolyzed, but rates on arylamides are exceedingly low.. It carries out the reaction Release of an N-terminal amino acid, preferentially leucine, but not glutamic or aspartic acids.. Functionally, presumably involved in the processing and regular turnover of intracellular proteins. Catalyzes the removal of unsubstituted N-terminal amino acids from various peptides. The polypeptide is Probable cytosol aminopeptidase (Shewanella loihica (strain ATCC BAA-1088 / PV-4)).